The sequence spans 143 residues: Large ribosomal subunit protein uL15 (143 aa).

The disordered stretch occupies residues 1–59 (MELNGIKPADGAKHYKRRVGRGIGSGIGKTAGRGHKGQKSRAGGYHKVGFEGGQMPMQR). The span at 21-31 (RGIGSGIGKTA) shows a compositional bias: gly residues.

The protein belongs to the universal ribosomal protein uL15 family. In terms of assembly, part of the 50S ribosomal subunit.

Binds to the 23S rRNA. This Albidiferax ferrireducens (strain ATCC BAA-621 / DSM 15236 / T118) (Rhodoferax ferrireducens) protein is Large ribosomal subunit protein uL15.